Here is a 193-residue protein sequence, read N- to C-terminus: Peptidyl-tRNA hydrolase (193 aa).

TRNA is bound at residue Tyr21. The Proton acceptor role is filled by His26. Residues Tyr72, Asn74, and Asn120 each coordinate tRNA.

Belongs to the PTH family. Monomer.

The protein resides in the cytoplasm. It carries out the reaction an N-acyl-L-alpha-aminoacyl-tRNA + H2O = an N-acyl-L-amino acid + a tRNA + H(+). Hydrolyzes ribosome-free peptidyl-tRNAs (with 1 or more amino acids incorporated), which drop off the ribosome during protein synthesis, or as a result of ribosome stalling. In terms of biological role, catalyzes the release of premature peptidyl moieties from peptidyl-tRNA molecules trapped in stalled 50S ribosomal subunits, and thus maintains levels of free tRNAs and 50S ribosomes. The protein is Peptidyl-tRNA hydrolase of Nocardia farcinica (strain IFM 10152).